Here is a 173-residue protein sequence, read N- to C-terminus: Small ribosomal subunit protein uS5 (173 aa).

The S5 DRBM domain maps to 17 to 80; sequence WQERVIQIRR…ADGKKQLIEV (64 aa).

It belongs to the universal ribosomal protein uS5 family. As to quaternary structure, part of the 30S ribosomal subunit. Contacts proteins S4 and S8.

With S4 and S12 plays an important role in translational accuracy. Functionally, located at the back of the 30S subunit body where it stabilizes the conformation of the head with respect to the body. This Synechocystis sp. (strain ATCC 27184 / PCC 6803 / Kazusa) protein is Small ribosomal subunit protein uS5.